The primary structure comprises 385 residues: UDP-N-acetylglucosamine--N-acetylmuramyl-(pentapeptide) pyrophosphoryl-undecaprenol N-acetylglucosamine transferase (385 aa).

Residues 24–26, Asn-143, Arg-180, Ser-214, and Gln-310 each bind UDP-N-acetyl-alpha-D-glucosamine; that span reads TAG.

This sequence belongs to the glycosyltransferase 28 family. MurG subfamily.

The protein resides in the cell membrane. It catalyses the reaction di-trans,octa-cis-undecaprenyl diphospho-N-acetyl-alpha-D-muramoyl-L-alanyl-D-glutamyl-meso-2,6-diaminopimeloyl-D-alanyl-D-alanine + UDP-N-acetyl-alpha-D-glucosamine = di-trans,octa-cis-undecaprenyl diphospho-[N-acetyl-alpha-D-glucosaminyl-(1-&gt;4)]-N-acetyl-alpha-D-muramoyl-L-alanyl-D-glutamyl-meso-2,6-diaminopimeloyl-D-alanyl-D-alanine + UDP + H(+). It participates in cell wall biogenesis; peptidoglycan biosynthesis. In terms of biological role, cell wall formation. Catalyzes the transfer of a GlcNAc subunit on undecaprenyl-pyrophosphoryl-MurNAc-pentapeptide (lipid intermediate I) to form undecaprenyl-pyrophosphoryl-MurNAc-(pentapeptide)GlcNAc (lipid intermediate II). In Mycolicibacterium smegmatis (strain ATCC 700084 / mc(2)155) (Mycobacterium smegmatis), this protein is UDP-N-acetylglucosamine--N-acetylmuramyl-(pentapeptide) pyrophosphoryl-undecaprenol N-acetylglucosamine transferase.